The sequence spans 287 residues: Protein PXR1 (287 aa).

The G-patch domain occupies Thr25 to Lys72. Basic and acidic residues predominate over residues Leu143–Asp155. Residues Leu143 to Val254 are disordered. Residues Ser163 to Lys190 show a composition bias toward basic residues. The segment covering Asp191 to Glu200 has biased composition (basic and acidic residues). Over residues Lys201–Lys220 the composition is skewed to basic residues. A compositionally biased stretch (basic and acidic residues) spans Asp221–Asp230. The segment covering Asn239–Pro251 has biased composition (polar residues).

Belongs to the PINX1 family.

The protein localises to the nucleus. It localises to the nucleolus. Functionally, involved in rRNA-processing at A0, A1 and A2 sites and negatively regulates telomerase. This chain is Protein PXR1 (PXR1), found in Vanderwaltozyma polyspora (strain ATCC 22028 / DSM 70294 / BCRC 21397 / CBS 2163 / NBRC 10782 / NRRL Y-8283 / UCD 57-17) (Kluyveromyces polysporus).